The following is a 236-amino-acid chain: Mitochondrial-abundant heat soluble protein (236 aa).

A mitochondrion-targeting transit peptide spans 1 to 73 (MSRYLLRDVQ…AARAGVVLRG (73 aa)). Disordered regions lie at residues 102–135 (RIHSQSSQKQAPTTVPTGSVSNSPQPEGKANEAA) and 165–209 (RSNG…EIVA). Polar residues-rich tracts occupy residues 105–126 (SQSSQKQAPTTVPTGSVSNSPQ) and 192–202 (APDSSKNTKSV). Residues 126–143 (QPEGKANEAAERAKQFMN) carry the MAHS motif motif.

It is found in the mitochondrion. Functionally, mitochondrial heat soluble protein acting as a molecular shield in water-deficient condition. This Ramazzottius varieornatus (Water bear) protein is Mitochondrial-abundant heat soluble protein.